The following is a 923-amino-acid chain: MEGAKPTLQLVYQAVQALYHDPDPSGKERASFWLGELQRSVHAWEISDQLLQIRQDVESCYFAAQTMKMKIQTSFYELPTDSHASLRDSLLTHIQNLKDLSPVIVTQLALAIADLALQMPSWKGCVQTLVEKYSNDVTSLPFLLEILTVLPEEVHSRSLRIGANRRTEIIEDLAFYSSTVVSLLMTCVEKAGTDEKMLMKVFRCLGSWFNLGVLDSNFMANNKLLALLFEVLQQDKTSSNLHEAASDCVCSALYAIENVETNLPLAMQLFQGVLTLETAYHMAVAREDLDKVLNYCRIFTELCETFLEKIVCTPGQGLGDLRTLELLLICAGHPQYEVVEISFNFWYRLGEHLYKTNDEVIHSIFKAYIQRLLHALARHCQLEPDHEGVPEETDDFGEFRMRVSDLVKDLIFLIGSMECFAQLYSTLKEGNPPWEVTEAVLFIMAAIAKSVDPENNPTLVEVLEGVVHLPETVHTAVRYTSIELVGEMSEVVDRNPQFLDPVLGYLMKGLCEKPLASAAAKAIHNICSVCRDHMAQHFNGLLEIAHSLDSFMLSPEAAVGLLKGTALVLARLPLDKITECLSELCSVQVMALKKLLSQEPSNGISSDPTVFLDRLAVIFRHTNPIVENGQTHPCQKVIQEIWPVLSETLNKHRADNRIVERCCRCLRFAVRCVGKGSAALLQPLVTQMVNVYHVHQHSCFLYLGSILVDEYGMEEGCRQGLLDMLQALCIPTFQLLEQQNGLQNHPDTVDDLFRLATRFIQRSPVTLLRSQVVIPILQWAIASTTLDHRDANSSVMRFLRDLIHTGVANDHEEDFELRKELIGQVMSQLGQQLVSQLLHTCCFCLPPYTLPDVAEVLWEIMQVDRPTFCRWLENSLKGLPKETTVGAVTVTHKQLTDFHKQVTSAEECKQVCWALRDFTRLFR.

Methionine 1 is subject to N-acetylmethionine. Phosphoserine is present on serine 74. A phosphothreonine mark is found at histidine 242 and threonine 896.

Interacts with (GTP-bound) Ran. Interacts with (phosphorylated) SFRS1 and SFRS2; leading to their nuclear import. Interacts with NUP62. Interacts with RBM4. Interacts with CPSF6, promoting its nuclear import.

It localises to the nucleus envelope. The protein localises to the cytoplasm. In terms of biological role, importin, which transports target proteins into the nucleus. Specifically mediates the nuclear import of splicing factor serine/arginine (SR) proteins, such as RBM4, SFRS1 and SFRS2, by recognizing phosphorylated SR domains. Also mediates the nuclear import of serine/arginine (SR) protein CPSF6, independently of CPSF6 phosphorylation. The nuclear import process is regulated by the small GTPase Ran that partitions between cytoplasm and nucleus in the predominantly GDP- and GTP-bound form, respectively. Importin associates with target cargo proteins in the cytoplasm, and the competitive binding of GTP-bound Ran induces the release of cargos in the nucleus. In Mus musculus (Mouse), this protein is Transportin-3.